A 632-amino-acid polypeptide reads, in one-letter code: Transcription factor tazR (632 aa).

The segment at residues 20–47 is a DNA-binding region (zn(2)-C6 fungal-type); that stretch reads CNECRARKLRCDRVRPTCGTCESLGVTC. The tract at residues 77 to 130 is disordered; that stretch reads WNGQQKAAGGSPGESPPCSEGGQTLRAVSESTSDGVHDEDHANGARPPSSQSSI.

The protein localises to the nucleus. In terms of biological role, transcription factor that regulates the expression of the gene cluster that mediates the biosynthesis of azaterrilone A and other azaphilones, a class of fungal metabolites characterized by a highly oxygenated pyrano-quinone bicyclic core and exhibiting a broad range of bioactivities. The chain is Transcription factor tazR from Aspergillus terreus (strain NIH 2624 / FGSC A1156).